The primary structure comprises 378 residues: Putative F-box/kelch-repeat protein At3g43710 (378 aa).

The F-box domain maps to 23–69 (TFGIEMLPDDLVLSCLARVPRMYYPILSLVSKRFRSFLTSTELYQTR). Kelch repeat units follow at residues 130–176 (NIYV…VLDG), 178–227 (IYVA…GYDG), and 262–308 (SQCV…VPTK).

The chain is Putative F-box/kelch-repeat protein At3g43710 from Arabidopsis thaliana (Mouse-ear cress).